Consider the following 97-residue polypeptide: Co-chaperonin GroES (97 aa).

It belongs to the GroES chaperonin family. Heptamer of 7 subunits arranged in a ring. Interacts with the chaperonin GroEL.

The protein resides in the cytoplasm. In terms of biological role, together with the chaperonin GroEL, plays an essential role in assisting protein folding. The GroEL-GroES system forms a nano-cage that allows encapsulation of the non-native substrate proteins and provides a physical environment optimized to promote and accelerate protein folding. GroES binds to the apical surface of the GroEL ring, thereby capping the opening of the GroEL channel. The chain is Co-chaperonin GroES from Pseudomonas fluorescens (strain Pf0-1).